Consider the following 228-residue polypeptide: MDIERVEQVRAVERLAHRRGLALMPRAGLAAADFVAARLPAGAQVLALAGPGNNGGDALVAATLLQARGYRVAVVMPAGPARLPDDARRAWQDWCAAGGQASADLPAHAPALVIDGLFGIGLARPLGGAWQGLIDQVNAWRVPVLALDVPSGLSAASGQPLGDPPGRPVRATWTLSFIGVPAALRAPGAAAWCGQQHLSLLGLTPAFLAEAVGPCGQATATAARRSGP.

The 201-residue stretch at Val9–Ala209 folds into the YjeF N-terminal domain. Asn53–Asp57 serves as a coordination point for (6S)-NADPHX. The K(+) site is built by Asn54 and Asp115. (6S)-NADPHX is bound by residues Gly119 to Pro125 and Asp148. Ser151 serves as a coordination point for K(+).

The protein belongs to the NnrE/AIBP family. K(+) serves as cofactor.

It carries out the reaction (6R)-NADHX = (6S)-NADHX. The catalysed reaction is (6R)-NADPHX = (6S)-NADPHX. Functionally, catalyzes the epimerization of the S- and R-forms of NAD(P)HX, a damaged form of NAD(P)H that is a result of enzymatic or heat-dependent hydration. This is a prerequisite for the S-specific NAD(P)H-hydrate dehydratase to allow the repair of both epimers of NAD(P)HX. The protein is NAD(P)H-hydrate epimerase of Bordetella bronchiseptica (strain ATCC BAA-588 / NCTC 13252 / RB50) (Alcaligenes bronchisepticus).